A 467-amino-acid polypeptide reads, in one-letter code: Uronate isomerase (467 aa).

Belongs to the metallo-dependent hydrolases superfamily. Uronate isomerase family.

It catalyses the reaction D-glucuronate = D-fructuronate. It carries out the reaction aldehydo-D-galacturonate = keto-D-tagaturonate. The protein operates within carbohydrate metabolism; pentose and glucuronate interconversion. In Solibacter usitatus (strain Ellin6076), this protein is Uronate isomerase.